The chain runs to 257 residues: GTP cyclohydrolase III (257 aa).

Belongs to the archaeal-type GTP cyclohydrolase family.

It catalyses the reaction GTP + 3 H2O = 2-amino-5-formylamino-6-(5-phospho-D-ribosylamino)pyrimidin-4(3H)-one + 2 phosphate + 2 H(+). Its function is as follows. Catalyzes the formation of 2-amino-5-formylamino-6-ribofuranosylamino-4(3H)-pyrimidinone ribonucleotide monophosphate and inorganic phosphate from GTP. Also has an independent pyrophosphate phosphohydrolase activity. This is GTP cyclohydrolase III from Halorubrum lacusprofundi (strain ATCC 49239 / DSM 5036 / JCM 8891 / ACAM 34).